Reading from the N-terminus, the 92-residue chain is C-C motif chemokine 3 (92 aa).

The first 19 residues, 1–19, serve as a signal peptide directing secretion; sequence MKVPGAALAVLLCTMSLCS. Intrachain disulfides connect cysteine 33-cysteine 57 and cysteine 34-cysteine 73.

This sequence belongs to the intercrine beta (chemokine CC) family. As to quaternary structure, self-associates. Also heterodimer of MIP-1-alpha(4-69) and MIP-1-beta(3-69). Interacts with CCR1.

It is found in the secreted. Its function is as follows. Monokine with inflammatory and chemokinetic properties. Binds to CCR1, CCR4 and CCR5. One of the major HIV-suppressive factors produced by CD8+ T-cells. Recombinant MIP-1-alpha induces a dose-dependent inhibition of different strains of HIV-1, HIV-2, and simian immunodeficiency virus (SIV). This Canis lupus familiaris (Dog) protein is C-C motif chemokine 3 (CCL3).